The chain runs to 145 residues: Large ribosomal subunit protein uL24 (145 aa).

Disordered regions lie at residues 1 to 21 (MKFNPFVTSDRSKNRKRHFNA) and 122 to 145 (KAKSRQVGKEKGKYKEETIEKMQE). Lysine 136 is covalently cross-linked (Glycyl lysine isopeptide (Lys-Gly) (interchain with G-Cter in SUMO2)). Threonine 139 is subject to Phosphothreonine.

Belongs to the universal ribosomal protein uL24 family. In terms of assembly, component of the large ribosomal subunit. Interacts with DHX33. In terms of processing, ufmylated by UFL1 in response to endoplasmic reticulum stress, promoting reticulophagy of endoplasmic reticulum sheets.

Its subcellular location is the cytoplasm. In terms of biological role, component of the large ribosomal subunit. The ribosome is a large ribonucleoprotein complex responsible for the synthesis of proteins in the cell. The polypeptide is Large ribosomal subunit protein uL24 (RPL26) (Bos taurus (Bovine)).